The following is a 102-amino-acid chain: Small ribosomal subunit protein uS10 (102 aa).

Belongs to the universal ribosomal protein uS10 family. As to quaternary structure, part of the 30S ribosomal subunit.

Involved in the binding of tRNA to the ribosomes. The chain is Small ribosomal subunit protein uS10 from Listeria innocua serovar 6a (strain ATCC BAA-680 / CLIP 11262).